The chain runs to 514 residues: 2,3-bisphosphoglycerate-independent phosphoglycerate mutase (514 aa).

Mn(2+) contacts are provided by Asp14 and Ser64. Ser64 acts as the Phosphoserine intermediate in catalysis. Residues His125, 155 to 156 (RD), Arg187, Arg193, 263 to 266 (RADR), and Lys336 contribute to the substrate site. Positions 403, 407, 444, 445, and 463 each coordinate Mn(2+).

It belongs to the BPG-independent phosphoglycerate mutase family. As to quaternary structure, monomer. Mn(2+) serves as cofactor.

The catalysed reaction is (2R)-2-phosphoglycerate = (2R)-3-phosphoglycerate. It functions in the pathway carbohydrate degradation; glycolysis; pyruvate from D-glyceraldehyde 3-phosphate: step 3/5. Functionally, catalyzes the interconversion of 2-phosphoglycerate and 3-phosphoglycerate. The polypeptide is 2,3-bisphosphoglycerate-independent phosphoglycerate mutase (Enterobacter sp. (strain 638)).